A 249-amino-acid chain; its full sequence is Enolase-phosphatase E1 (249 aa).

This sequence belongs to the HAD-like hydrolase superfamily. MasA/MtnC family. Monomer. Mg(2+) is required as a cofactor.

It catalyses the reaction 5-methylsulfanyl-2,3-dioxopentyl phosphate + H2O = 1,2-dihydroxy-5-(methylsulfanyl)pent-1-en-3-one + phosphate. The protein operates within amino-acid biosynthesis; L-methionine biosynthesis via salvage pathway; L-methionine from S-methyl-5-thio-alpha-D-ribose 1-phosphate: step 3/6. Its pathway is amino-acid biosynthesis; L-methionine biosynthesis via salvage pathway; L-methionine from S-methyl-5-thio-alpha-D-ribose 1-phosphate: step 4/6. Its function is as follows. Bifunctional enzyme that catalyzes the enolization of 2,3-diketo-5-methylthiopentyl-1-phosphate (DK-MTP-1-P) into the intermediate 2-hydroxy-3-keto-5-methylthiopentenyl-1-phosphate (HK-MTPenyl-1-P), which is then dephosphorylated to form the acireductone 1,2-dihydroxy-3-keto-5-methylthiopentene (DHK-MTPene). The polypeptide is Enolase-phosphatase E1 (Synechococcus sp. (strain CC9605)).